Consider the following 122-residue polypeptide: Urease subunit beta (122 aa).

Belongs to the urease beta subunit family. Heterotrimer of UreA (gamma), UreB (beta) and UreC (alpha) subunits. Three heterotrimers associate to form the active enzyme.

The protein localises to the cytoplasm. It catalyses the reaction urea + 2 H2O + H(+) = hydrogencarbonate + 2 NH4(+). Its pathway is nitrogen metabolism; urea degradation; CO(2) and NH(3) from urea (urease route): step 1/1. This is Urease subunit beta from Flavobacterium johnsoniae (strain ATCC 17061 / DSM 2064 / JCM 8514 / BCRC 14874 / CCUG 350202 / NBRC 14942 / NCIMB 11054 / UW101) (Cytophaga johnsonae).